A 185-amino-acid polypeptide reads, in one-letter code: Serine/arginine-rich splicing factor RSZ21A (185 aa).

Residues 2 to 73 form the RRM domain; sequence ARVYVGNLDP…WRVELSRNAS (72 aa). The segment at 87-104 adopts a CCHC-type zinc-finger fold; it reads SKCYECGETGHFARECRL. The disordered stretch occupies residues 109 to 185; sequence GGLGSGRRRS…YDNGYRRSRS (77 aa). The span at 114 to 131 shows a compositional bias: basic residues; the sequence is GRRRSRSRSRSRSPRYRR. Composition is skewed to low complexity over residues 132–145 and 152–163; these read SPSYGRRSYSPAGR and VSPARARSYSRS.

This sequence belongs to the splicing factor SR family. Post-translationally, extensively phosphorylated on serine residues in the RS domain. In terms of tissue distribution, expressed in roots, leaves and immature seeds.

The protein resides in the nucleus. In terms of biological role, involved in pre-mRNA splicing. This Oryza sativa subsp. japonica (Rice) protein is Serine/arginine-rich splicing factor RSZ21A (RSZ21A).